A 474-amino-acid polypeptide reads, in one-letter code: Peroxisome proliferator-activated receptor alpha (474 aa).

A DNA-binding region (nuclear receptor) is located at residues 106–180 (NLECRVCSDK…VGMSHNAIRF (75 aa)). NR C4-type zinc fingers lie at residues 109-129 (CRVC…CEGC) and 146-168 (CERM…FEKC). The NR LBD domain maps to 245-472 (FVIHDMETLC…HPLLQEIYRD (228 aa)).

This sequence belongs to the nuclear hormone receptor family. NR1 subfamily. As to quaternary structure, heterodimer with the retinoid X receptor. As to expression, ubiquitous.

Its subcellular location is the nucleus. Its function is as follows. Ligand-activated transcription factor. Key regulator of lipid metabolism. Activated by lipids. Receptor for peroxisome proliferators such as hypolipidemic drugs and fatty acids. Once activated by a ligand, the receptor binds to promoter elements of target genes. Regulates the peroxisomal beta-oxidation pathway of fatty acids. This is Peroxisome proliferator-activated receptor alpha (ppara) from Xenopus laevis (African clawed frog).